The sequence spans 324 residues: Probable tRNA pseudouridine synthase B (324 aa).

Aspartate 72 serves as the catalytic Nucleophile. Positions 239–314 constitute a PUA domain; the sequence is LPRVVILDSA…LVIETRKVFM (76 aa).

It belongs to the pseudouridine synthase TruB family. Type 2 subfamily.

The enzyme catalyses uridine(55) in tRNA = pseudouridine(55) in tRNA. Could be responsible for synthesis of pseudouridine from uracil-55 in the psi GC loop of transfer RNAs. The sequence is that of Probable tRNA pseudouridine synthase B from Methanothermobacter thermautotrophicus (strain ATCC 29096 / DSM 1053 / JCM 10044 / NBRC 100330 / Delta H) (Methanobacterium thermoautotrophicum).